Reading from the N-terminus, the 677-residue chain is Pannexin-2 (677 aa).

The Cytoplasmic portion of the chain corresponds to 11-47 (MATALLAGEKLRELILPGAQDDKAGALAALLLQLKLE). Residues 48–70 (LPFDRVVTIGTVLVPILLVTLVF) form a helical membrane-spanning segment. Residues 71–123 (TKNFAEEPIYCYTPHNFTRDQALYARGYCWTELRDALPGVDASLWPSLFEHKF) lie on the Extracellular side of the membrane. A glycan (N-linked (GlcNAc...) asparagine) is linked at Asn86. The chain crosses the membrane as a helical span at residues 124–146 (LPYALLAFAAIMYVPALGWEFLA). Topologically, residues 147-226 (STRLTSELNF…RGRSNFLAKL (80 aa)) are cytoplasmic. Residues 227–249 (YLARHVLILLLSAVPISYLCTYY) traverse the membrane as a helical segment. Over 250–292 (ATQKQNEFTCALGASPDGAAGAGPAVRVSCKLPSVQLQRIIAG) the chain is Extracellular. Residues 293–315 (VDIVLLCVMNLIILVNLIHLFIF) traverse the membrane as a helical segment. Residues 316-643 (RKSNFIFDKL…AREEEDGGPR (328 aa)) are Cytoplasmic-facing. 2 disordered regions span residues 393–423 (ATPT…PPVV) and 454–510 (NSKA…KKHA). A compositionally biased stretch (pro residues) spans 492 to 504 (GPGPAPAPAPPPA). Position 593 is a phosphoserine (Ser593).

It belongs to the pannexin family. In terms of assembly, homoheptameric. Post-translationally, S-palmitoylated in neural stem and progenitor cells. Cleaved by CASP3 and CASP7 during apoptosis. Cleavage has no effect on it function.

It is found in the cell membrane. It localises to the golgi apparatus membrane. The protein resides in the endoplasmic reticulum membrane. The catalysed reaction is ATP(in) = ATP(out). The enzyme catalyses chloride(in) = chloride(out). It catalyses the reaction iodide(out) = iodide(in). It carries out the reaction Na(+)(in) = Na(+)(out). The catalysed reaction is D-gluconate(in) = D-gluconate(out). Its function is as follows. Ion channel with a slight anion preference. Also able to release ATP. Plays a role in regulating neurogenesis and apoptosis in keratinocytes. This Homo sapiens (Human) protein is Pannexin-2.